Here is a 149-residue protein sequence, read N- to C-terminus: MADQLTEEQIAEFKEAFSLFDKDGDGTITTKELGTVMRSLGQNPTEAELQDMINEVDADGDGTIDFPEFLTMMARKMKDTDSEEEIREAFRVFDKDGDGFISAAELRHVMTNLGEKLTDEEVDEMIREADIDGDGQVNYEEFVKMMTSK.

A2 bears the N-acetylalanine mark. 4 EF-hand domains span residues E8–N43, P44–D79, D81–K116, and L117–K149. Ca(2+) is bound by residues D21, D23, D25, T27, E32, D57, D59, D61, T63, E68, D94, D96, D98, and E105. Position 116 is an N6,N6,N6-trimethyllysine (K116). Residues D130, D132, D134, Q136, and E141 each contribute to the Ca(2+) site.

It belongs to the calmodulin family.

Its function is as follows. Calmodulin mediates the control of a large number of enzymes, ion channels and other proteins by Ca(2+). Among the enzymes to be stimulated by the calmodulin-Ca(2+) complex are a number of protein kinases and phosphatases. The chain is Calmodulin from Renilla reniformis (Sea pansy).